The chain runs to 483 residues: MEYAPEFDNSYARQLSGFYTRLQPTPLKGARLLYHSKPLAQELGLDAHWFTEPKTAVWAGEALLPGMEPLAQVYSGHQFGMWAGQLGDGRGILLGEQRLNDGRYMDWHLKGAGLTPYSRMGDGRAVLRSVIREFLASEALHHLGIPTSRALTIVTSDHPIYREQTERGAMLLRVAESHIRFGHFEHFYYRQQPKQVQQLADYVIARHWPQWVGHQECYRLWFTDVVERTARLMAHWQTVGFAHGVMNTDNMSILGITMDYGPFGFLDDYVPGYICNHSDHQGRYAYDNQPAVALWNLHRLGHALSGLMSADQLQLALEAYEPALMVAYGEQMRAKLGFLERDSQDNDLLTGLLSLMIKEGRDYTRTFRLLSEVEVHSAQSPLRDDFIDRAAFDDWYRRYRSRLQQESIDDDQRQQSMKAANPKYILRNYLAQQAITQAEKDDIQPLQRLHQALQQPFTDQPEFDDLAALPPDWGKHLEISCSS.

Residues Gly87, Gly89, Arg90, Lys110, Asp122, Gly123, Arg173, and Arg180 each coordinate ATP. Asp249 (proton acceptor) is an active-site residue. The Mg(2+) site is built by Asn250 and Asp259. Residue Asp259 coordinates ATP.

This sequence belongs to the SELO family. Mg(2+) serves as cofactor. Requires Mn(2+) as cofactor.

It catalyses the reaction L-seryl-[protein] + ATP = 3-O-(5'-adenylyl)-L-seryl-[protein] + diphosphate. The catalysed reaction is L-threonyl-[protein] + ATP = 3-O-(5'-adenylyl)-L-threonyl-[protein] + diphosphate. It carries out the reaction L-tyrosyl-[protein] + ATP = O-(5'-adenylyl)-L-tyrosyl-[protein] + diphosphate. The enzyme catalyses L-histidyl-[protein] + UTP = N(tele)-(5'-uridylyl)-L-histidyl-[protein] + diphosphate. It catalyses the reaction L-seryl-[protein] + UTP = O-(5'-uridylyl)-L-seryl-[protein] + diphosphate. The catalysed reaction is L-tyrosyl-[protein] + UTP = O-(5'-uridylyl)-L-tyrosyl-[protein] + diphosphate. Functionally, nucleotidyltransferase involved in the post-translational modification of proteins. It can catalyze the addition of adenosine monophosphate (AMP) or uridine monophosphate (UMP) to a protein, resulting in modifications known as AMPylation and UMPylation. The sequence is that of Protein nucleotidyltransferase YdiU from Yersinia pseudotuberculosis serotype O:1b (strain IP 31758).